Consider the following 388-residue polypeptide: Alpha-2A adrenergic receptor (388 aa).

Residues 1 to 22 (MICGANATNGTNATKEYTLLVA) are Extracellular-facing. N-linked (GlcNAc...) asparagine glycans are attached at residues Asn-6, Asn-9, and Asn-12. The helical transmembrane segment at 23–48 (LPLSIAVGLLILLIIFGNVLVIIAVF) threads the bilayer. Residues 49 to 59 (TSRALRAPQNL) are Cytoplasmic-facing. The chain crosses the membrane as a helical span at residues 60–85 (FLVSLASADILVATLVMPFSLANELM). Over 86–95 (GMWTFGGVWC) the chain is Extracellular. A disulfide bridge connects residues Cys-95 and Cys-169. The chain crosses the membrane as a helical span at residues 96–118 (EIYLALDVLFCTASITHLCAISL). The Cytoplasmic segment spans residues 119–138 (DRYWSITQAIEYNLKRTPQR). A helical membrane pass occupies residues 139–162 (IKRIIFIVWIIAAVISCPPLITMK). Over 163–173 (KSEGDICDINK) the chain is Extracellular. Residues 174–198 (EKWYIVSSCIGSFFLPCIIMVLVYI) form a helical membrane-spanning segment. At 199–311 (RIYQIAKKRT…RQNREKRFTF (113 aa)) the chain is on the cytoplasmic side. The segment at 208-291 (TRAPPGDHRK…PGDGDKTEAC (84 aa)) is disordered. A compositionally biased stretch (basic and acidic residues) spans 212–231 (PGDHRKNEVGKKENDPHEKL). Residues 266 to 275 (LKKKSSKGKT) are compositionally biased toward basic residues. Residues 312-337 (VLAVVIGVFVICWFPFFFTYTFTAFC) form a helical membrane-spanning segment. Topologically, residues 338 to 344 (DCCVPET) are extracellular. The chain crosses the membrane as a helical span at residues 345-368 (LFKFFFWFGYCNSSLNPIIYTIFN). The Cytoplasmic segment spans residues 369–388 (NDFRRSFKKILCRRDKRRVV). Cys-380 carries the S-palmitoyl cysteine lipid modification.

Belongs to the G-protein coupled receptor 1 family. Adrenergic receptor subfamily. ADRA2A sub-subfamily.

It is found in the cell membrane. Its function is as follows. Alpha-2 adrenergic receptors mediate the catecholamine-induced inhibition of adenylate cyclase through the action of G proteins. The order of potency for this receptor is dexmedetomidine &gt; oxymetazoline = epinephrine &gt; norepinephrine. In Danio rerio (Zebrafish), this protein is Alpha-2A adrenergic receptor.